The sequence spans 75 residues: Meucin-49 (75 aa).

The signal sequence occupies residues 1–22 (MNKKILLVIFIVTMLIVDEVNS).

The protein belongs to the non-disulfide-bridged peptide (NDBP) superfamily. Long chain multifunctional peptide (group 2) family. Expressed by the venom gland.

The protein localises to the secreted. In terms of biological role, insecticidal toxin and antimicrobial peptide with potent activity against both Gram-negative and -positive bacteria, as well as against fungi. Acts by disrupting bacterial membrane integrity. Shows broad-spectrum and highly potent bactericidal activities against the Gram-positive bacteria B.cereus, B.megaterium, B.subtilis, M.luteus, S.aureus, S.epidermidis, S.warneri, S.griseus, S.scabiei, S.mutans, S.salivarius, and S.sanguinis. Also exhibits a wide spectrum of activity against the Gram-negative bacteria A.faecalis, E.coli, P.aeruginosa, P.solanacearum, S.enterica, S.marcescens, and S.maltophilia. Also shows antimicrobial activities against the fungal strains Aspergillus flavus, A.fumigatus, A.nidulans, A.niger, Beauveria bassiana, and Saccharomyces cerevisiae. Its antibiotic activity is potentiated by other antibacterial peptides such as MeuNaTxbeta-4. Also induces cytolysis on mice, lizards and birds erythrocytes. The sequence is that of Meucin-49 from Mesobuthus eupeus (Lesser Asian scorpion).